The primary structure comprises 282 residues: Energy-coupling factor transporter ATP-binding protein EcfA1 (282 aa).

An ABC transporter domain is found at 6-243; that stretch reads ISFDHVTFTY…VEMLKRIGLD (238 aa). Position 40–47 (40–47) interacts with ATP; that stretch reads GHNGSGKS.

It belongs to the ABC transporter superfamily. Energy-coupling factor EcfA family. Forms a stable energy-coupling factor (ECF) transporter complex composed of 2 membrane-embedded substrate-binding proteins (S component), 2 ATP-binding proteins (A component) and 2 transmembrane proteins (T component).

The protein resides in the cell membrane. ATP-binding (A) component of a common energy-coupling factor (ECF) ABC-transporter complex. Unlike classic ABC transporters this ECF transporter provides the energy necessary to transport a number of different substrates. The protein is Energy-coupling factor transporter ATP-binding protein EcfA1 of Lactobacillus delbrueckii subsp. bulgaricus (strain ATCC 11842 / DSM 20081 / BCRC 10696 / JCM 1002 / NBRC 13953 / NCIMB 11778 / NCTC 12712 / WDCM 00102 / Lb 14).